Consider the following 1444-residue polypeptide: Bromodomain-containing protein 4 (1444 aa).

7 disordered regions span residues 1–44, 154–217, 279–362, 492–523, 540–645, 722–986, and 1020–1422; these read MGDG…PKRQ, VEIS…PQPI, AAPP…KQQE, PVMATASSSDTSSDSSSESESSTDDSEEERAQ, AALS…GGAA, CLRK…SSQP, and TSLM…RREA. Positions 11–27 are enriched in low complexity; it reads SGSSSSQGQPSSQAPSS. The Bromo 1 domain occupies 43-149; sequence RQTNQLQYLL…KVFLTKISEM (107 aa). Over residues 186-196 the composition is skewed to polar residues; that stretch reads ASPQTRGLSNL. A compositionally biased stretch (pro residues) spans 206 to 216; sequence PQGPPTLPPQP. The segment covering 303-319 has biased composition (polar residues); sequence TTTPTANDQLNESSPAE. The segment covering 327-347 has biased composition (basic and acidic residues); it reads PRRDNTRPSKLPKKEAPDSQH. A Bromo 2 domain is found at 358 to 467; the sequence is PKQQEQLRYC…DVFEMRFAKM (110 aa). A compositionally biased stretch (low complexity) spans 498-511; sequence SSSDTSSDSSSESE. Residues 498–517 form an NPS region region; the sequence is SSSDTSSDSSSESESSTDDS. The BID region stretch occupies residues 538 to 610; sequence QLAALSQPQA…SKKLSKKEGG (73 aa). The span at 549-569 shows a compositional bias: basic residues; the sequence is KPKKKEKEKKEKKKDKHKKKA. The 98-residue stretch at 633 to 730 folds into the NET domain; that stretch reads DTEEDLGLTG…SCLRKKKKPA (98 aa). Low complexity-rich tracts occupy residues 746-760, 800-823, 919-954, and 1036-1046; these read GTSSDSGSSSESSSS, LQPQTPALQPSIQLKQQQPQHPSP, LQQSTSQQQPPPQQTLVPPQQLQPQQQQPAPPQQQH, and PSLLQSVQVQS. Polar residues predominate over residues 1090–1109; that stretch reads PLQTAQTQPGQHKVSMPSTK. Residues 1110 to 1121 show a composition bias toward low complexity; that stretch reads AQQIIQQQQATQ. The tract at residues 1126 to 1444 is C-terminal (CTD) region; that stretch reads RQHKADSYNS…LMAIFEENLF (319 aa). Residues 1151–1163 show a composition bias toward polar residues; the sequence is QIPQYSLVHQSPS. Positions 1246 to 1255 are enriched in basic and acidic residues; that stretch reads QDKEKFKQEP. Positions 1282 to 1296 are enriched in low complexity; the sequence is SSTTPSSGLKSSSDS. A compositionally biased stretch (basic and acidic residues) spans 1298–1357; that stretch reads EQFRRAAREKEEREKALKAQVEQAEKDRLRKEQEKLRGRDEEDSIEPPRRPLEEPRRRQE. A compositionally biased stretch (low complexity) spans 1367 to 1389; the sequence is QHQTQAQAQTLNPAQSPSASQPT. The segment covering 1405–1422 has biased composition (basic and acidic residues); it reads QQREMARRREQERRRREA.

This sequence belongs to the BET family. As to expression, widely expressed.

The protein resides in the nucleus. It is found in the chromosome. Its function is as follows. Chromatin reader protein that recognizes and binds acetylated histones and plays a key role in transmission of epigenetic memory across cell divisions and transcription regulation. Remains associated with acetylated chromatin throughout the entire cell cycle and provides epigenetic memory for postmitotic G1 gene transcription by preserving acetylated chromatin status and maintaining high-order chromatin structure. During interphase, plays a key role in regulating the transcription of signal-inducible genes by associating with the P-TEFb complex and recruiting it to promoters. This Danio rerio (Zebrafish) protein is Bromodomain-containing protein 4 (brd4).